The chain runs to 443 residues: MADLETSDLSRVLPSSNLLSLEQLQEQLKRHRDELFQQQQDSHVLGSKPDDSLNNNYLLSHQYHDSQVYIPSNTWSFTQGLIVGQLSVVFVIVIFIKFFVFAESSPALAKSSITKDASVVIVKRDKKDQSSSDDADPDDDSETTASNAKVAAILEKTYYDVDNHSPESLDWFNVLVAQTIAQLRSEALLSDNIYHSLNNFLLKSELPEYLDKINLTEIDIGDDFPIFSNCRIKHSKDGSGRLEAKIDVDLSDTLTLGIETKLLLNHPRPLTAVLPVQLSVSMVRFSGCLTVSLINTADPEFAELSAHNSPEPGEPMSRSHSAGSPGGDSSHDEVISTPDSSSHTAQRKHSKDDPNDGTALMFSFSPDYRLEFTVKSLIGARAKLQDVPKISSLIENRLRAWFIERCIEPRFQVVRLPSLWPRRKNTREQVTNKNGDKVEDGSN.

Over 1 to 80 (MADLETSDLS…PSNTWSFTQG (80 aa)) the chain is Lumenal. A helical membrane pass occupies residues 81-101 (LIVGQLSVVFVIVIFIKFFVF). Topologically, residues 102–443 (AESSPALAKS…NGDKVEDGSN (342 aa)) are cytoplasmic. 2 disordered regions span residues 126-146 (KKDQ…TTAS) and 304-358 (LSAH…NDGT). The segment covering 131 to 142 (SSDDADPDDDSE) has biased composition (acidic residues). Positions 165 to 417 (SPESLDWFNV…EPRFQVVRLP (253 aa)) constitute an SMP-LTD domain.

It belongs to the MMM1 family. As to quaternary structure, homodimer. Component of the ER-mitochondria encounter structure (ERMES) or MDM complex, composed of MMM1, MDM10, MDM12 and MDM34. An MMM1 homodimer associates with one molecule of MDM12 on each side in a pairwise head-to-tail manner, and the SMP-LTD domains of MMM1 and MDM12 generate a continuous hydrophobic tunnel for phospholipid trafficking.

Its subcellular location is the endoplasmic reticulum membrane. Its function is as follows. Component of the ERMES/MDM complex, which serves as a molecular tether to connect the endoplasmic reticulum (ER) and mitochondria. Components of this complex are involved in the control of mitochondrial shape and protein biogenesis, and function in nonvesicular lipid trafficking between the ER and mitochondria. The MDM12-MMM1 subcomplex functions in the major beta-barrel assembly pathway that is responsible for biogenesis of all outer membrane beta-barrel proteins, and acts in a late step after the SAM complex. The MDM10-MDM12-MMM1 subcomplex further acts in the TOM40-specific pathway after the action of the MDM12-MMM1 complex. Essential for establishing and maintaining the structure of mitochondria and maintenance of mtDNA nucleoids. This is Maintenance of mitochondrial morphology protein 1 from Scheffersomyces stipitis (strain ATCC 58785 / CBS 6054 / NBRC 10063 / NRRL Y-11545) (Yeast).